The primary structure comprises 197 residues: Probable GTP-binding protein EngB (197 aa).

Positions 22 to 197 (TGVEVAFAGR…LKEKLDIWYQ (176 aa)) constitute an EngB-type G domain. Residues 30-37 (GRSNAGKS), 57-61 (GRTQL), 75-78 (DLPG), 142-145 (TKAD), and 177-179 (FSS) each bind GTP. 2 residues coordinate Mg(2+): S37 and T59.

The protein belongs to the TRAFAC class TrmE-Era-EngA-EngB-Septin-like GTPase superfamily. EngB GTPase family. The cofactor is Mg(2+).

Necessary for normal cell division and for the maintenance of normal septation. The polypeptide is Probable GTP-binding protein EngB (Francisella philomiragia subsp. philomiragia (strain ATCC 25017 / CCUG 19701 / FSC 153 / O#319-036)).